The sequence spans 238 residues: MPKKISRRLQELRKKVEERPYEPKEALQLLKETATAKFLEAAEAHVRLGIDPKYTDQQLRTTVALPKGTGQTIRIAVIAKGEKVNEALAAGADLAGSEELIEQISKGMMEFDRLIATPDVMPQVAKLGRLLGPRGLMPSPKGGTVTFDLTKAIDEFKAGKLEFRADRSGIVHVMFGKTSFSVEDLLINLKALQECIDRNRPSGAKGRYWRTIFVSATMGPSIEIDVSSLQDLKLTEAA.

The protein belongs to the universal ribosomal protein uL1 family. In terms of assembly, part of the 50S ribosomal subunit.

In terms of biological role, binds directly to 23S rRNA. The L1 stalk is quite mobile in the ribosome, and is involved in E site tRNA release. Protein L1 is also a translational repressor protein, it controls the translation of the L11 operon by binding to its mRNA. This Trichodesmium erythraeum (strain IMS101) protein is Large ribosomal subunit protein uL1.